Here is a 480-residue protein sequence, read N- to C-terminus: tRNA-2-methylthio-N(6)-dimethylallyladenosine synthase (480 aa).

The MTTase N-terminal domain maps to 2-118 (NRVHIKTYGC…VPGYLDNLRA (117 aa)). The [4Fe-4S] cluster site is built by cysteine 11, cysteine 47, and cysteine 81. Residues 145-169 (DHLLPQDSDSDSQPSTLNSQLRGAA) form a disordered region. Residues 149–159 (PQDSDSDSQPS) show a composition bias toward low complexity. The region spanning 171 to 405 (PPPQITAFVS…LELLRQNSER (235 aa)) is the Radical SAM core domain. [4Fe-4S] cluster contacts are provided by cysteine 185, cysteine 189, and cysteine 192. Positions 408-470 (ALLLDTVEEV…VSTLYGELML (63 aa)) constitute a TRAM domain.

This sequence belongs to the methylthiotransferase family. MiaB subfamily. In terms of assembly, monomer. Requires [4Fe-4S] cluster as cofactor.

The protein resides in the cytoplasm. The enzyme catalyses N(6)-dimethylallyladenosine(37) in tRNA + (sulfur carrier)-SH + AH2 + 2 S-adenosyl-L-methionine = 2-methylsulfanyl-N(6)-dimethylallyladenosine(37) in tRNA + (sulfur carrier)-H + 5'-deoxyadenosine + L-methionine + A + S-adenosyl-L-homocysteine + 2 H(+). In terms of biological role, catalyzes the methylthiolation of N6-(dimethylallyl)adenosine (i(6)A), leading to the formation of 2-methylthio-N6-(dimethylallyl)adenosine (ms(2)i(6)A) at position 37 in tRNAs that read codons beginning with uridine. This is tRNA-2-methylthio-N(6)-dimethylallyladenosine synthase from Opitutus terrae (strain DSM 11246 / JCM 15787 / PB90-1).